Consider the following 325-residue polypeptide: Putative aryl-alcohol dehydrogenase C750.01 (325 aa).

It belongs to the aldo/keto reductase family. Aldo/keto reductase 2 subfamily.

The sequence is that of Putative aryl-alcohol dehydrogenase C750.01 from Schizosaccharomyces pombe (strain 972 / ATCC 24843) (Fission yeast).